Consider the following 266-residue polypeptide: Glucosamine-6-phosphate deaminase (266 aa).

The Proton acceptor; for enolization step role is filled by aspartate 72. Aspartate 141 acts as the For ring-opening step in catalysis. Histidine 143 acts as the Proton acceptor; for ring-opening step in catalysis. Glutamate 148 (for ring-opening step) is an active-site residue.

It belongs to the glucosamine/galactosamine-6-phosphate isomerase family. NagB subfamily. Homohexamer.

It catalyses the reaction alpha-D-glucosamine 6-phosphate + H2O = beta-D-fructose 6-phosphate + NH4(+). It functions in the pathway amino-sugar metabolism; N-acetylneuraminate degradation; D-fructose 6-phosphate from N-acetylneuraminate: step 5/5. Allosterically activated by N-acetylglucosamine 6-phosphate (GlcNAc6P). Its function is as follows. Catalyzes the reversible isomerization-deamination of glucosamine 6-phosphate (GlcN6P) to form fructose 6-phosphate (Fru6P) and ammonium ion. This is Glucosamine-6-phosphate deaminase from Pectobacterium carotovorum subsp. carotovorum (strain PC1).